The primary structure comprises 454 residues: tRNA modification GTPase MnmE (454 aa).

(6S)-5-formyl-5,6,7,8-tetrahydrofolate contacts are provided by arginine 23, glutamate 80, and lysine 120. A TrmE-type G domain is found at 216–377 (GMKVVIAGRP…LRNHLKQSMG (162 aa)). K(+) is bound at residue asparagine 226. Residues 226–231 (NAGKSS), 245–251 (TDIAGTT), 270–273 (DTAG), 335–338 (NKAD), and 358–360 (SAR) each bind GTP. Residue serine 230 participates in Mg(2+) binding. Positions 245, 247, and 250 each coordinate K(+). Threonine 251 lines the Mg(2+) pocket. Lysine 454 provides a ligand contact to (6S)-5-formyl-5,6,7,8-tetrahydrofolate.

It belongs to the TRAFAC class TrmE-Era-EngA-EngB-Septin-like GTPase superfamily. TrmE GTPase family. In terms of assembly, homodimer. Heterotetramer of two MnmE and two MnmG subunits. It depends on K(+) as a cofactor.

It localises to the cytoplasm. Functionally, exhibits a very high intrinsic GTPase hydrolysis rate. Involved in the addition of a carboxymethylaminomethyl (cmnm) group at the wobble position (U34) of certain tRNAs, forming tRNA-cmnm(5)s(2)U34. The polypeptide is tRNA modification GTPase MnmE (Shigella flexneri serotype 5b (strain 8401)).